A 466-amino-acid chain; its full sequence is MSVVPVADVLQGRVAVDQEVTVRGWVRTRRDSKAGISFLAVYDGSCFDPVQAVINNSLPNYNEEVLHLTTGCSVVVTGKVVASPGQGQSFEIQATKVEVAGWVEDPDTYPMAAKRHSIEYLREVAHLRPRTNLIGAVARVRHTLAQALHRFFDEQGFFWVSTPLITASDTEGAGEMFRVSTLDLENLPRNDQGRVDFDKDFFGKESFLTVSGQLNGETYACALSKIYTFGPTFRAENSNTSRHLAEFWMLEPEVAFADLEDNARLAEAMLKYVFNAVLEERADDMKFFAERVDKDAIARLERFVSTDFAQVDYTEAVAILERCGKTFENPVFWGVDLSSEHERYLAEEHFKAPVVVKNYPKEIKAFYMRLNEDGKTVAAMDVLAPGIGEIIGGSQREERLDVLDARMAEMGLNKEDYWWYRDLRRYGTVPHSGFGLGFERLIAYVTGVQNVRDVIPFPRTPRNASF.

Belongs to the class-II aminoacyl-tRNA synthetase family. As to quaternary structure, homodimer.

It localises to the cytoplasm. The enzyme catalyses tRNA(Asn) + L-asparagine + ATP = L-asparaginyl-tRNA(Asn) + AMP + diphosphate + H(+). This chain is Asparagine--tRNA ligase, found in Salmonella choleraesuis (strain SC-B67).